The chain runs to 348 residues: GMP reductase (348 aa).

Residue 108 to 131 (ADFIKLRQILALSPSLKFICIDVA) coordinates NADP(+). K(+)-binding residues include Gly181 and Gly183. Catalysis depends on Cys186, which acts as the Thioimidate intermediate. 216-239 (IVSDGGCTMPGDVAKAFGGGADFV) provides a ligand contact to NADP(+).

The protein belongs to the IMPDH/GMPR family. GuaC type 1 subfamily. As to quaternary structure, homotetramer.

It catalyses the reaction IMP + NH4(+) + NADP(+) = GMP + NADPH + 2 H(+). In terms of biological role, catalyzes the irreversible NADPH-dependent deamination of GMP to IMP. It functions in the conversion of nucleobase, nucleoside and nucleotide derivatives of G to A nucleotides, and in maintaining the intracellular balance of A and G nucleotides. This is GMP reductase from Edwardsiella ictaluri (strain 93-146).